We begin with the raw amino-acid sequence, 165 residues long: Protein eva-1 homolog B (165 aa).

Residues 29-49 (GLYFVLGVCFGLLLTLCLLVI) form a helical membrane-spanning segment. 2 disordered regions span residues 57–109 (PRPR…GPLN) and 143–165 (LLGT…MHYY). The segment covering 74–84 (EPEDDDEDEED) has biased composition (acidic residues). A phosphothreonine mark is found at threonine 85, threonine 148, and threonine 158.

This sequence belongs to the EVA1 family.

Its subcellular location is the membrane. The protein is Protein eva-1 homolog B (EVA1B) of Homo sapiens (Human).